Reading from the N-terminus, the 548-residue chain is Natural resistance-associated macrophage protein 1 (548 aa).

A disordered region spans residues 1 to 38 (MSGDTGPPKQGGTRYGSISSPPSPEPQQAPPGGTYLSE). The Cytoplasmic portion of the chain corresponds to 1 to 55 (MSGDTGPPKQGGTRYGSISSPPSPEPQQAPPGGTYLSEKIPIPDTESGTFSLRKL). Residues 56–73 (WAFTGPGFLMSIAFLDPG) traverse the membrane as a helical segment. Topologically, residues 74–82 (NIESDLQAG) are extracellular. The helical transmembrane segment at 83–102 (AVAGFKLLWVLLWATVLGLL) threads the bilayer. Over 103–139 (CQRLAARLGVVTGKDLGEVCHLYYPKVPRILLWLTIE) the chain is Cytoplasmic. Residues 140–160 (LAIVGSDMQEVIGTAIAFSLL) traverse the membrane as a helical segment. Residues 161-164 (SAGR) are Extracellular-facing. A helical membrane pass occupies residues 165–184 (IPLWGGVLITIVDAFFFLFL). Residues 185 to 193 (DNYGLRKLE) lie on the Cytoplasmic side of the membrane. A helical membrane pass occupies residues 194 to 214 (AFFGFLITIMALTFGYEYVVA). At 215–237 (QPAQGALLQGLFLPSCPGCGQPE) the chain is on the extracellular side. Residues 238–256 (LLQAVGIIGAIIMPHNIYL) form a helical membrane-spanning segment. The Cytoplasmic portion of the chain corresponds to 257 to 284 (HSSLVKSREVDRSRRADIREANMYFLIE). Residues 285 to 304 (ATIALSVSFLINLFVMAVFG) traverse the membrane as a helical segment. Residues 305–346 (QAFYKQTNQAAFNICANSSLQDYAPIFPRNNLTVAVDIYQGG) lie on the Extracellular side of the membrane. Residues Asn-321 and Asn-335 are each glycosylated (N-linked (GlcNAc...) asparagine). A helical transmembrane segment spans residues 347–366 (VILGCLFGPAALYIWAVGLL). Over 367-397 (AAGQSSTMTGTYAGQFVMEGFLKLRWSRFAR) the chain is Cytoplasmic. A helical transmembrane segment spans residues 398-415 (VLLTRSCAILPTVLLAVF). Topologically, residues 416–426 (RDLRDLSGLND) are extracellular. The chain crosses the membrane as a helical span at residues 427–447 (LLNVLQSLLLPFAVLPILTFT). Residues 448–463 (SMPALMREFANGLVSK) lie on the Cytoplasmic side of the membrane. A helical transmembrane segment spans residues 464–485 (VITSSIMVLVCAVNLYFVISYV). The Extracellular portion of the chain corresponds to 486 to 493 (PSLPHPAY). The chain crosses the membrane as a helical span at residues 494 to 513 (FSLVALLAAAYLGLTTYLVW). Topologically, residues 514 to 548 (TCLITQGATLLAHSSHQRFLYGLPEEDQEKGRTSG) are cytoplasmic.

Belongs to the NRAMP family.

It localises to the late endosome membrane. It is found in the lysosome membrane. The enzyme catalyses Zn(2+)(in) + H(+)(out) = Zn(2+)(out) + H(+)(in). The catalysed reaction is Fe(2+)(in) + H(+)(out) = Fe(2+)(out) + H(+)(in). It catalyses the reaction Mn(2+)(in) + H(+)(out) = Mn(2+)(out) + H(+)(in). Macrophage-specific antiporter that fluxes metal ions in either direction against a proton gradient. Localized to late endosomal lysosomal membranes, delivers bivalent cations from the cytosol into these acidic compartments where they may directly affect antimicrobial activity. Involved in iron metabolism and host natural resistance to infection with intracellular parasites. Pathogen resistance involves sequestration of Fe(2+) and Mn(2+), cofactors of both prokaryotic and eukaryotic catalases and superoxide dismutases, not only to protect the macrophage against its own generation of reactive oxygen species, but to deny the cations to the pathogen for synthesis of its protective enzymes. This Bison bison (American bison) protein is Natural resistance-associated macrophage protein 1 (SLC11A1).